A 275-amino-acid chain; its full sequence is Large ribosomal subunit protein uL2c (275 aa).

A disordered region spans residues 224-263 (VMNPVDHPHGGGEGRAPIGRKRPLTPWGRPALGKKSRKNH).

Belongs to the universal ribosomal protein uL2 family. As to quaternary structure, part of the 50S ribosomal subunit.

Its subcellular location is the plastid. It is found in the chloroplast. This chain is Large ribosomal subunit protein uL2c (rpl2), found in Chaetosphaeridium globosum (Charophycean green alga).